Here is a 321-residue protein sequence, read N- to C-terminus: Quinol oxidase subunit 2 (321 aa).

An N-terminal signal peptide occupies residues 1–25; the sequence is MIFLFRALKPLLVLALLTVVFVLGG. The N-palmitoyl cysteine moiety is linked to residue Cys-26. Cys-26 is lipidated: S-diacylglycerol cysteine. 2 helical membrane-spanning segments follow: residues 49–69 and 90–110; these read SIGF…IILV and TFLE…LSVP. The segment at 294–321 is disordered; sequence QAVSPHSKTDPFENVKKNEFKKSDDTEE. The segment covering 300–321 has biased composition (basic and acidic residues); that stretch reads SKTDPFENVKKNEFKKSDDTEE.

The protein belongs to the cytochrome c oxidase subunit 2 family. Interacts with FloT.

The protein localises to the cell membrane. Its subcellular location is the membrane raft. The catalysed reaction is 2 a quinol + O2 = 2 a quinone + 2 H2O. Catalyzes quinol oxidation with the concomitant reduction of oxygen to water. Major component for energy conversion during vegetative growth. Subunit II transfers the electrons from a quinol to the binuclear center of the catalytic subunit I. This Bacillus subtilis (strain 168) protein is Quinol oxidase subunit 2 (qoxA).